We begin with the raw amino-acid sequence, 380 residues long: MSDSPIKYRLIKKEKHTGARLGEIITPHGTFPTPMFMPVGTQATVKTQSPEELKEMGSGIILSNTYHLWLRPGDELIARAGGLHKFMNWDQPILTDSGGFQVYSLADSRNITEEGVTFKNHLNGSKMLLSPEKAISIQNNLGSDIMMSFDECPQFYQPYDYVKKSIERTSRWAERGLKAHRRPHDQGLFGIVQGAGFEDLRRQSAHDLVSMDFSGYSIGGLAVGETHEEMNAVLDFTTQLLPENKPRYLMGVGAPDSLIDGVIRGVDMFDCVLPTRIARNGTCMTSQGRLVVKNAQFAEDFTPLDPECDCYTCNNYTRAYLRHLLKADETFGIRLTSYHNLYFLLNLMKQVRQAIMDDNLLEFRKYFVEKYGYNKSGRNF.

Residue D96 is the Proton acceptor of the active site. Substrate is bound by residues 96-100 (DSGGF), D150, Q193, and G220. The RNA binding stretch occupies residues 251–257 (GVGAPDS). D270 acts as the Nucleophile in catalysis. Residues 275–279 (TRIAR) are RNA binding; important for wobble base 34 recognition. 4 residues coordinate Zn(2+): C308, C310, C313, and H339.

Belongs to the queuine tRNA-ribosyltransferase family. As to quaternary structure, homodimer. Within each dimer, one monomer is responsible for RNA recognition and catalysis, while the other monomer binds to the replacement base PreQ1. Zn(2+) is required as a cofactor.

It carries out the reaction 7-aminomethyl-7-carbaguanine + guanosine(34) in tRNA = 7-aminomethyl-7-carbaguanosine(34) in tRNA + guanine. It participates in tRNA modification; tRNA-queuosine biosynthesis. In terms of biological role, catalyzes the base-exchange of a guanine (G) residue with the queuine precursor 7-aminomethyl-7-deazaguanine (PreQ1) at position 34 (anticodon wobble position) in tRNAs with GU(N) anticodons (tRNA-Asp, -Asn, -His and -Tyr). Catalysis occurs through a double-displacement mechanism. The nucleophile active site attacks the C1' of nucleotide 34 to detach the guanine base from the RNA, forming a covalent enzyme-RNA intermediate. The proton acceptor active site deprotonates the incoming PreQ1, allowing a nucleophilic attack on the C1' of the ribose to form the product. After dissociation, two additional enzymatic reactions on the tRNA convert PreQ1 to queuine (Q), resulting in the hypermodified nucleoside queuosine (7-(((4,5-cis-dihydroxy-2-cyclopenten-1-yl)amino)methyl)-7-deazaguanosine). The chain is Queuine tRNA-ribosyltransferase from Streptococcus pneumoniae (strain P1031).